A 184-amino-acid polypeptide reads, in one-letter code: TRAF-interacting protein with FHA domain-containing protein A (184 aa).

A Phosphothreonine; by ALPK1 modification is found at Thr9. The region spanning 47–103 is the FHA domain; that stretch reads VKFGRNSNICHYTFQDKQVSRVQFSLQLFKKFNSSVLSFEIKNMSKKTNLIVDSREL. Residues 165–184 form a disordered region; the sequence is TYSLCSSQSSSPTEMDENES. The span at 167–177 shows a compositional bias: polar residues; sequence SLCSSQSSSPT.

This sequence belongs to the TIFA family. Homooligomer; homooligomerizes following phosphorylation at Thr-9. Interacts with IRAK1, TRAF2 and TRAF6. Interacts with TIFAB; binding to TIFAB inhibits TRAF6 activation, possibly by inducing a conformational change in TIFA. Interacts with ZCCHC11; binding to ZCCHC11 suppresses the TRAF6-dependent activation of NF-kappa-B. Phosphorylated at Thr-9 following detection of ADP-D-glycero-beta-D-manno-heptose (ADP-Heptose) by ALPK1. Phosphorylation at Thr-9 by ALPK1 leads to the formation of an intermolecular binding between the FHA domain and phosphorylated Thr-9, promoting TIFA oligomerization and TIFA-mediated NF-kappa-B activation.

Its subcellular location is the cytoplasm. Its function is as follows. Adapter molecule that plays a key role in the activation of pro-inflammatory NF-kappa-B signaling following detection of bacterial pathogen-associated molecular pattern metabolites (PAMPs). Promotes activation of an innate immune response by inducing the oligomerization and polyubiquitination of TRAF6, which leads to the activation of TAK1 and IKK through a proteasome-independent mechanism. TIFA-dependent innate immune response is triggered by ADP-D-glycero-beta-D-manno-heptose (ADP-Heptose), a potent PAMP present in all Gram-negative and some Gram-positive bacteria: ADP-Heptose is recognized by ALPK1, which phosphorylates TIFA at Thr-9, leading to TIFA homooligomerization and subsequent activation of pro-inflammatory NF-kappa-B signaling. The polypeptide is TRAF-interacting protein with FHA domain-containing protein A (Homo sapiens (Human)).